The chain runs to 153 residues: ATP synthase subunit b' (153 aa).

A helical transmembrane segment spans residues T20–F40.

This sequence belongs to the ATPase B chain family. As to quaternary structure, F-type ATPases have 2 components, F(1) - the catalytic core - and F(0) - the membrane proton channel. F(1) has five subunits: alpha(3), beta(3), gamma(1), delta(1), epsilon(1). F(0) has four main subunits: a(1), b(1), b'(1) and c(10-14). The alpha and beta chains form an alternating ring which encloses part of the gamma chain. F(1) is attached to F(0) by a central stalk formed by the gamma and epsilon chains, while a peripheral stalk is formed by the delta, b and b' chains.

The protein localises to the cellular thylakoid membrane. Functionally, f(1)F(0) ATP synthase produces ATP from ADP in the presence of a proton or sodium gradient. F-type ATPases consist of two structural domains, F(1) containing the extramembraneous catalytic core and F(0) containing the membrane proton channel, linked together by a central stalk and a peripheral stalk. During catalysis, ATP synthesis in the catalytic domain of F(1) is coupled via a rotary mechanism of the central stalk subunits to proton translocation. Component of the F(0) channel, it forms part of the peripheral stalk, linking F(1) to F(0). The b'-subunit is a diverged and duplicated form of b found in plants and photosynthetic bacteria. This chain is ATP synthase subunit b', found in Prochlorococcus marinus (strain SARG / CCMP1375 / SS120).